The primary structure comprises 398 residues: MAKLTVKDVDLKGKKVLVRVDFNVPLKDGVITNDNRITAALPTIKYIIEQGGRAILFSHLGRVKEEADKEGKSLAPVAADLAAKLGQDVVFPGVTRGSKLEEAINALEDGQVLLVENTRFEDVDGKKESKNDEELGKYWASLGDGIFVNDAFGTAHRAHASNVGISANVEKAVAGFLLENEIAYIQEAVETPERPFVAILGGSKVSDKIGVIENLLEKADKVLIGGGMTYTFYKAQGIEIGNSLVEEDKLDVAKDLLEKSNGKLILPVDSKEANAFAGYTEVRDTEGEAVSEGFLGLDIGPKSIAEFDQALTGAKTVVWNGPMGVFENPDFQAGTIDVMDAIVKQPGVKSIIGGGDSAAAAINLGRADKFSWISTGGGASMELLEGKVLPGLAALTEK.

Substrate is bound by residues 21–23 (DFN), R36, 59–62 (HLGR), R119, and R157. Residues K208, G296, E327, and 354–357 (GGDS) each bind ATP.

The protein belongs to the phosphoglycerate kinase family. In terms of assembly, monomer.

It is found in the cytoplasm. The enzyme catalyses (2R)-3-phosphoglycerate + ATP = (2R)-3-phospho-glyceroyl phosphate + ADP. The protein operates within carbohydrate degradation; glycolysis; pyruvate from D-glyceraldehyde 3-phosphate: step 2/5. The chain is Phosphoglycerate kinase from Streptococcus pyogenes serotype M5 (strain Manfredo).